The chain runs to 274 residues: Hydroxyethylthiazole kinase (274 aa).

Met-46 contacts substrate. Residues Arg-122 and Thr-173 each contribute to the ATP site. Position 200 (Gly-200) interacts with substrate.

This sequence belongs to the Thz kinase family. It depends on Mg(2+) as a cofactor.

It carries out the reaction 5-(2-hydroxyethyl)-4-methylthiazole + ATP = 4-methyl-5-(2-phosphooxyethyl)-thiazole + ADP + H(+). It functions in the pathway cofactor biosynthesis; thiamine diphosphate biosynthesis; 4-methyl-5-(2-phosphoethyl)-thiazole from 5-(2-hydroxyethyl)-4-methylthiazole: step 1/1. Functionally, catalyzes the phosphorylation of the hydroxyl group of 4-methyl-5-beta-hydroxyethylthiazole (THZ). This Clostridium tetani (strain Massachusetts / E88) protein is Hydroxyethylthiazole kinase.